Reading from the N-terminus, the 866-residue chain is Probable outer membrane usher protein ElfC (866 aa).

An N-terminal signal peptide occupies residues Met1–Ala35.

Belongs to the fimbrial export usher family.

The protein localises to the cell outer membrane. Its function is as follows. Part of the elfADCG fimbrial operon, which could be required for adherence to host epithelial cells. Could be involved in the export and assembly of the ElfA fimbrial subunits across the outer membrane. This chain is Probable outer membrane usher protein ElfC (elfC), found in Escherichia coli O157:H7.